The primary structure comprises 72 residues: Small ribosomal subunit protein bS20 (72 aa).

The protein belongs to the bacterial ribosomal protein bS20 family.

Binds directly to 16S ribosomal RNA. In Klebsiella pneumoniae, this protein is Small ribosomal subunit protein bS20 (rpsT).